Consider the following 124-residue polypeptide: Ubiquitin-related modifier 1 (124 aa).

Positions 34–53 (IPSLVPKDNTTSAKNPPPKD) are disordered. Position 124 is a 1-thioglycine (Gly124). Gly124 participates in a covalent cross-link: Glycyl lysine isopeptide (Gly-Lys) (interchain with K-? in acceptor proteins).

Belongs to the URM1 family. In terms of processing, C-terminal thiocarboxylation occurs in 2 steps, it is first acyl-adenylated (-COAMP) via the hesA/moeB/thiF part of UBA4, then thiocarboxylated (-COSH) via the rhodanese domain of UBA4.

Its subcellular location is the cytoplasm. It functions in the pathway tRNA modification; 5-methoxycarbonylmethyl-2-thiouridine-tRNA biosynthesis. Functionally, acts as a sulfur carrier required for 2-thiolation of mcm(5)S(2)U at tRNA wobble positions of cytosolic tRNA(Lys), tRNA(Glu) and tRNA(Gln). Serves as sulfur donor in tRNA 2-thiolation reaction by being thiocarboxylated (-COSH) at its C-terminus by the MOCS3 homolog UBA4. The sulfur is then transferred to tRNA to form 2-thiolation of mcm(5)S(2)U. Prior mcm(5) tRNA modification by the elongator complex is required for 2-thiolation. Also acts as a ubiquitin-like protein (UBL) that is covalently conjugated via an isopeptide bond to lysine residues of target proteins such as AHP1. The thiocarboxylated form serves as substrate for conjugation and oxidative stress specifically induces the formation of UBL-protein conjugates. The polypeptide is Ubiquitin-related modifier 1 (Coprinopsis cinerea (strain Okayama-7 / 130 / ATCC MYA-4618 / FGSC 9003) (Inky cap fungus)).